A 270-amino-acid polypeptide reads, in one-letter code: 4-hydroxy-tetrahydrodipicolinate reductase (270 aa).

NAD(+)-binding positions include 9–14 (GSGGRM) and Glu-35. Arg-36 contacts NADP(+). NAD(+) contacts are provided by residues 99–101 (GTT) and 123–126 (ASNY). Catalysis depends on His-156, which acts as the Proton donor/acceptor. Residue His-157 coordinates (S)-2,3,4,5-tetrahydrodipicolinate. Lys-160 functions as the Proton donor in the catalytic mechanism. 166 to 167 (GT) serves as a coordination point for (S)-2,3,4,5-tetrahydrodipicolinate.

Belongs to the DapB family.

Its subcellular location is the cytoplasm. It carries out the reaction (S)-2,3,4,5-tetrahydrodipicolinate + NAD(+) + H2O = (2S,4S)-4-hydroxy-2,3,4,5-tetrahydrodipicolinate + NADH + H(+). The enzyme catalyses (S)-2,3,4,5-tetrahydrodipicolinate + NADP(+) + H2O = (2S,4S)-4-hydroxy-2,3,4,5-tetrahydrodipicolinate + NADPH + H(+). It participates in amino-acid biosynthesis; L-lysine biosynthesis via DAP pathway; (S)-tetrahydrodipicolinate from L-aspartate: step 4/4. Its function is as follows. Catalyzes the conversion of 4-hydroxy-tetrahydrodipicolinate (HTPA) to tetrahydrodipicolinate. The chain is 4-hydroxy-tetrahydrodipicolinate reductase from Histophilus somni (strain 2336) (Haemophilus somnus).